We begin with the raw amino-acid sequence, 124 residues long: Fluoride-specific ion channel FluC 1 (124 aa).

4 consecutive transmembrane segments (helical) span residues 1–21 (MCAV…ALGA), 30–50 (LWPG…LLGY), 64–84 (FLGV…VDAV), and 93–113 (LYVV…MLAG). Na(+) is bound by residues Gly-71 and Thr-74.

It belongs to the fluoride channel Fluc/FEX (TC 1.A.43) family.

The protein resides in the cell membrane. The catalysed reaction is fluoride(in) = fluoride(out). Its activity is regulated as follows. Na(+) is not transported, but it plays an essential structural role and its presence is essential for fluoride channel function. Functionally, fluoride-specific ion channel. Important for reducing fluoride concentration in the cell, thus reducing its toxicity. The protein is Fluoride-specific ion channel FluC 1 of Rhodococcus jostii (strain RHA1).